A 268-amino-acid polypeptide reads, in one-letter code: Shikimate dehydrogenase (NADP(+)) (268 aa).

Shikimate is bound by residues 13 to 15 and T60; that span reads SLS. The active-site Proton acceptor is the K64. Residue E76 coordinates NADP(+). Shikimate-binding residues include N85 and D100. NADP(+) contacts are provided by residues 124-128, 148-153, and I209; these read GAGGA and NRTMAR. Residue Y211 participates in shikimate binding. An NADP(+)-binding site is contributed by G232.

The protein belongs to the shikimate dehydrogenase family. Homodimer.

The catalysed reaction is shikimate + NADP(+) = 3-dehydroshikimate + NADPH + H(+). It functions in the pathway metabolic intermediate biosynthesis; chorismate biosynthesis; chorismate from D-erythrose 4-phosphate and phosphoenolpyruvate: step 4/7. In terms of biological role, involved in the biosynthesis of the chorismate, which leads to the biosynthesis of aromatic amino acids. Catalyzes the reversible NADPH linked reduction of 3-dehydroshikimate (DHSA) to yield shikimate (SA). In Staphylococcus aureus (strain bovine RF122 / ET3-1), this protein is Shikimate dehydrogenase (NADP(+)).